A 235-amino-acid polypeptide reads, in one-letter code: Lipoprotein-releasing system ATP-binding protein LolD (235 aa).

An ABC transporter domain is found at 5–235; the sequence is LECRDIRKVY…LMTESASVEG (231 aa). 41-48 serves as a coordination point for ATP; that stretch reads GSSGSGKS.

The protein belongs to the ABC transporter superfamily. Lipoprotein translocase (TC 3.A.1.125) family. The complex is composed of two ATP-binding proteins (LolD) and two transmembrane proteins (LolC and LolE).

The protein localises to the cell inner membrane. In terms of biological role, part of the ABC transporter complex LolCDE involved in the translocation of mature outer membrane-directed lipoproteins, from the inner membrane to the periplasmic chaperone, LolA. Responsible for the formation of the LolA-lipoprotein complex in an ATP-dependent manner. The polypeptide is Lipoprotein-releasing system ATP-binding protein LolD (Vibrio parahaemolyticus serotype O3:K6 (strain RIMD 2210633)).